Here is a 147-residue protein sequence, read N- to C-terminus: Hemoglobin anodic subunit beta (147 aa).

Residues 2 to 147 enclose the Globin domain; the sequence is EWTDGERTAI…VTSALARQYH (146 aa). Heme b contacts are provided by H63 and H92.

It belongs to the globin family. In terms of assembly, heterotetramer of two alpha chains and two beta chains. As to expression, red blood cells.

Involved in oxygen transport from gills to the various peripheral tissues. This is Hemoglobin anodic subunit beta from Gymnothorax unicolor (Brown moray).